Reading from the N-terminus, the 1159-residue chain is WASH complex subunit 5 (1159 aa).

The protein belongs to the strumpellin family. As to quaternary structure, component of the WASH complex.

The protein resides in the early endosome. Its function is as follows. Acts at least in part as component of the WASH complex which seems to regulate washc1 nucleation-promoting factor (NPF) activity and is required for its membrane targeting during endosomal sorting. The chain is WASH complex subunit 5 from Danio rerio (Zebrafish).